Here is an 84-residue protein sequence, read N- to C-terminus: Large ribosomal subunit protein bL31B (84 aa).

Belongs to the bacterial ribosomal protein bL31 family. Type B subfamily. As to quaternary structure, part of the 50S ribosomal subunit.

This chain is Large ribosomal subunit protein bL31B, found in Rhodococcus erythropolis (strain PR4 / NBRC 100887).